Here is a 538-residue protein sequence, read N- to C-terminus: MTDLNKVVKELEALGIYDVKEVVYNPSYEQLFEEETKPGLEGFEKGTLTTTGAVAVDTGIFTGRSPKDKYIVLDEKTKDTVWWTSETAKNDNKPMNQATWQSLKDLVTNQLSRKRLFVVDGFCGASEHDRIAVRIVTEVAWQAHFVKNMFIRPTEEQLKNFEPDFVVMNGSKVTNPNWKEQGLNSENFVAFNLTERIQLIGGTWYGGEMKKGMSSMMNYFLPLKGVGAMHCSANVGKDGDVAIFFGLSGTGKTTLSTDPKRELIGDDEHGWDDVGIFNFEGGCYAKTIHLSEENEPDIYRAIRRDALLENVVVRSDGSVDFDDGSKTENTRVSYPIYHIDNIVKPVSRAGHATKVIFLTADAFGVLPPVSKLTPEQTKYYFLSGFTAKLAGTERGITEPTPTFSACFGAAFLTLHPTQYAEVLVKRMQAAGAEAYLVNTGWNGTGKRISIKDTRGIIDAILDGSIEKAEMGELPIFNLAIPKALPGVDSAILDPRDTYADKAQWQSKAEDLAGRFVKNFVKYATNEEGKALIAAGPKA.

Substrate is bound by residues arginine 64, tyrosine 205, and lysine 211. ATP is bound by residues lysine 211, histidine 230, and 246–254 (GLSGTGKTT). 2 residues coordinate Mn(2+): lysine 211 and histidine 230. Aspartate 267 contacts Mn(2+). Residues glutamate 295, arginine 331, 447–448 (RI), and threonine 453 contribute to the ATP site. Arginine 331 is a substrate binding site.

Belongs to the phosphoenolpyruvate carboxykinase (ATP) family. Monomer. It depends on Mn(2+) as a cofactor.

It localises to the cytoplasm. It carries out the reaction oxaloacetate + ATP = phosphoenolpyruvate + ADP + CO2. The protein operates within carbohydrate biosynthesis; gluconeogenesis. Functionally, involved in the gluconeogenesis. Catalyzes the conversion of oxaloacetate (OAA) to phosphoenolpyruvate (PEP) through direct phosphoryl transfer between the nucleoside triphosphate and OAA. This is Phosphoenolpyruvate carboxykinase (ATP) from Haemophilus influenzae (strain ATCC 51907 / DSM 11121 / KW20 / Rd).